A 370-amino-acid chain; its full sequence is Cytochrome b (370 aa).

4 consecutive transmembrane segments (helical) span residues Phe25 to Val45, Trp69 to Ile90, Trp105 to Leu125, and Phe170 to Leu190. 2 residues coordinate heme b: His75 and His89. His174 and His188 together coordinate heme b. Residue His193 coordinates a ubiquinone. 4 consecutive transmembrane segments (helical) span residues Tyr218–Phe238, Leu280–His300, Leu312–Thr332, and Phe339–Pro358.

Belongs to the cytochrome b family. In terms of assembly, the cytochrome bc1 complex contains 3 respiratory subunits (MT-CYB, CYC1 and UQCRFS1), 2 core proteins (UQCRC1 and UQCRC2) and probably 6 low-molecular weight proteins. The cofactor is heme b.

The protein resides in the mitochondrion inner membrane. Functionally, component of the ubiquinol-cytochrome c reductase complex (complex III or cytochrome b-c1 complex) that is part of the mitochondrial respiratory chain. The b-c1 complex mediates electron transfer from ubiquinol to cytochrome c. Contributes to the generation of a proton gradient across the mitochondrial membrane that is then used for ATP synthesis. The polypeptide is Cytochrome b (MT-CYB) (Chilabothrus subflavus (Jamaican yellow boa)).